Consider the following 135-residue polypeptide: ATP synthase epsilon chain (135 aa).

Belongs to the ATPase epsilon chain family. As to quaternary structure, F-type ATPases have 2 components, CF(1) - the catalytic core - and CF(0) - the membrane proton channel. CF(1) has five subunits: alpha(3), beta(3), gamma(1), delta(1), epsilon(1). CF(0) has three main subunits: a, b and c.

It is found in the cell inner membrane. Produces ATP from ADP in the presence of a proton gradient across the membrane. The polypeptide is ATP synthase epsilon chain (Rhodopseudomonas palustris (strain BisA53)).